We begin with the raw amino-acid sequence, 784 residues long: Ubiquitin carboxyl-terminal hydrolase 1 (784 aa).

Disordered stretches follow at residues 1-21 (MPGV…SKKN) and 34-56 (KRAL…RGSE). The segment covering 7-16 (SESNGLSRGS) has biased composition (polar residues). S16 and S42 each carry phosphoserine. The segment covering 45–56 (NEEKTSEYRGSE) has biased composition (basic and acidic residues). S67 is modified (phosphoserine). In terms of domain architecture, USP spans 81–784 (VGLNNLGNTC…TPYLLFYKKL (704 aa)). C90 functions as the Nucleophile in the catalytic mechanism. 2 stretches are compositionally biased toward basic and acidic residues: residues 233–243 (VEEQSLQKEET) and 252–264 (DSMR…KEQL). Disordered stretches follow at residues 233 to 342 (VEEQ…INWL) and 362 to 414 (TTNQ…KSGN). S474 bears the Phosphoserine mark. The Proton acceptor role is filled by H592. Residues 684–725 (NPDKVVGTPFTDNRNSETNDTTNGTHESDRNKESSDQTGVNM) are disordered. Residues 693 to 708 (FTDNRNSETNDTTNGT) show a composition bias toward polar residues. The segment covering 709–718 (HESDRNKESS) has biased composition (basic and acidic residues). S767 carries the post-translational modification Phosphoserine.

It belongs to the peptidase C19 family. In terms of assembly, interacts with FANCD2 and PCNA. Interacts with WDR48. Interacts with ATAD5; the interaction regulates USP1-mediated PCNA deubiquitination. Post-translationally, autocatalytic cleavage of USP1 following UV irradiation inactivates it, leading to an increase in ubiquitinated PCNA, recruitment of POLH and translesion synthesis. Ubiquitinated by the CRL2(KLHDC2) complex following autocatalytic cleavage, leading to its degradation: the CRL2(KLHDC2) complex recognizes the diglycine (Gly-Gly) at the C-terminus.

The protein localises to the nucleus. The enzyme catalyses Thiol-dependent hydrolysis of ester, thioester, amide, peptide and isopeptide bonds formed by the C-terminal Gly of ubiquitin (a 76-residue protein attached to proteins as an intracellular targeting signal).. In terms of biological role, negative regulator of DNA damage repair which specifically deubiquitinates monoubiquitinated FANCD2. Also involved in PCNA-mediated translesion synthesis (TLS) by deubiquitinating monoubiquitinated PCNA. Has almost no deubiquitinating activity by itself and requires the interaction with WDR48 to have a high activity. In Mus musculus (Mouse), this protein is Ubiquitin carboxyl-terminal hydrolase 1.